The chain runs to 2005 residues: Structural maintenance of chromosomes flexible hinge domain-containing protein 1 (2005 aa).

Residues 1–13 (MAAADGGGPGGAS) show a composition bias toward gly residues. Residues 1-23 (MAAADGGGPGGASVGTEEDGGGV) form a disordered region. Alanine 2 carries the post-translational modification N-acetylalanine. Positions 111–702 (TKERIDFLPH…LSVTWPEGDE (592 aa)) are ATPase activity domain. Lysine 1349 bears the N6-acetyllysine mark. Glycyl lysine isopeptide (Lys-Gly) (interchain with G-Cter in SUMO2) cross-links involve residues lysine 1374 and lysine 1496. Threonine 1499 carries the post-translational modification Phosphothreonine. The region spanning 1720-1847 (GDVLGKIAHL…DNLDAANHYR (128 aa)) is the SMC hinge domain. The residue at position 1802 (lysine 1802) is an N6-succinyllysine. Serine 1974 carries the post-translational modification Phosphoserine.

This sequence belongs to the SMC family. Highly divergent. Homodimer; homodimerizes via its SMC hinge domain. Interacts with LRIF1. Sumoylated with SUMO1.

It is found in the chromosome. The catalysed reaction is ATP + H2O = ADP + phosphate + H(+). Functionally, non-canonical member of the structural maintenance of chromosomes (SMC) protein family that plays a key role in epigenetic silencing by regulating chromatin architecture. Promotes heterochromatin formation in both autosomes and chromosome X, probably by mediating the merge of chromatin compartments. Plays a key role in chromosome X inactivation in females by promoting the spreading of heterochromatin. Recruited to inactivated chromosome X by Xist RNA and acts by mediating the merge of chromatin compartments: promotes random chromatin interactions that span the boundaries of existing structures, leading to create a compartment-less architecture typical of inactivated chromosome X. Required to facilitate Xist RNA spreading. Also required for silencing of a subset of clustered autosomal loci in somatic cells, such as the DUX4 locus. Has ATPase activity; may participate in structural manipulation of chromatin in an ATP-dependent manner as part of its role in gene expression regulation. Also plays a role in DNA repair: localizes to sites of DNA double-strand breaks in response to DNA damage to promote the repair of DNA double-strand breaks. Acts by promoting non-homologous end joining (NHEJ) and inhibiting homologous recombination (HR) repair. This is Structural maintenance of chromosomes flexible hinge domain-containing protein 1 from Homo sapiens (Human).